The sequence spans 371 residues: 4-hydroxy-3-methylbut-2-en-1-yl diphosphate synthase (flavodoxin) (371 aa).

4 residues coordinate [4Fe-4S] cluster: cysteine 269, cysteine 272, cysteine 304, and glutamate 311.

It belongs to the IspG family. The cofactor is [4Fe-4S] cluster.

The catalysed reaction is (2E)-4-hydroxy-3-methylbut-2-enyl diphosphate + oxidized [flavodoxin] + H2O + 2 H(+) = 2-C-methyl-D-erythritol 2,4-cyclic diphosphate + reduced [flavodoxin]. The protein operates within isoprenoid biosynthesis; isopentenyl diphosphate biosynthesis via DXP pathway; isopentenyl diphosphate from 1-deoxy-D-xylulose 5-phosphate: step 5/6. Converts 2C-methyl-D-erythritol 2,4-cyclodiphosphate (ME-2,4cPP) into 1-hydroxy-2-methyl-2-(E)-butenyl 4-diphosphate. This is 4-hydroxy-3-methylbut-2-en-1-yl diphosphate synthase (flavodoxin) from Acinetobacter baumannii (strain AB307-0294).